The following is a 45-amino-acid chain: uncharacterized protein (45 aa).

An N-terminal signal peptide occupies residues 1–19 (MTFQILFLFVFHFVYIFRA).

This is an uncharacterized protein from Saccharomyces cerevisiae (strain ATCC 204508 / S288c) (Baker's yeast).